The sequence spans 158 residues: Large ribosomal subunit protein uL18 (158 aa).

It belongs to the universal ribosomal protein uL18 family. Part of the 50S ribosomal subunit. Contacts the 5S and 23S rRNAs.

In terms of biological role, this is one of the proteins that bind and probably mediate the attachment of the 5S RNA into the large ribosomal subunit, where it forms part of the central protuberance. In Picrophilus torridus (strain ATCC 700027 / DSM 9790 / JCM 10055 / NBRC 100828 / KAW 2/3), this protein is Large ribosomal subunit protein uL18.